The following is a 218-amino-acid chain: Peptide methionine sulfoxide reductase MsrA (218 aa).

The active site involves Cys-57.

The protein belongs to the MsrA Met sulfoxide reductase family.

The enzyme catalyses L-methionyl-[protein] + [thioredoxin]-disulfide + H2O = L-methionyl-(S)-S-oxide-[protein] + [thioredoxin]-dithiol. It carries out the reaction [thioredoxin]-disulfide + L-methionine + H2O = L-methionine (S)-S-oxide + [thioredoxin]-dithiol. Functionally, has an important function as a repair enzyme for proteins that have been inactivated by oxidation. Catalyzes the reversible oxidation-reduction of methionine sulfoxide in proteins to methionine. The polypeptide is Peptide methionine sulfoxide reductase MsrA (Brucella anthropi (Ochrobactrum anthropi)).